Consider the following 591-residue polypeptide: Transcription factor COE1 (591 aa).

The residue at position 1 (methionine 1) is an N-acetylmethionine. Over residues 1–14 (MFGIQESIQRSGSS) the composition is skewed to polar residues. Positions 1–21 (MFGIQESIQRSGSSMKEEPLG) are disordered. A Glycyl lysine isopeptide (Lys-Gly) (interchain with G-Cter in SUMO1); alternate cross-link involves residue lysine 16. Lysine 16 participates in a covalent cross-link: Glycyl lysine isopeptide (Lys-Gly) (interchain with G-Cter in SUMO2); alternate. The interaction with DNA stretch occupies residues 63–66 (RKSN). A C5-type zinc finger spans residues 151–170 (CRVLLTHEIMCSRCCDKKSC). Interaction with DNA stretches follow at residues 197-204 (NCLKNAGN) and 236-239 (NNSK). Positions 262–345 (PCIKAISPSE…KGTPGRFIYT (84 aa)) constitute an IPT/TIG domain. A disordered region spans residues 457-480 (GFTRNSSSVSPHGYVPSTTPQQTN).

It belongs to the COE family. Homodimer. Interacts with ZNF423 and ZNF521, leading to prevent EBF1 to bind DNA and activate target genes. Interacts with CCR4-NOT component CNOT3. As to quaternary structure, (Microbial infection) Interacts with Epstein-barr virus protein EBNA2.

Its subcellular location is the nucleus. Key pioneer transcription factor of B-cell specification and commitment. Recognizes variations of the palindromic sequence 5'-ATTCCCNNGGGAATT-3'. Operates in a transcription factor network to activate B-cell-specific genes and repress genes associated with alternative cell fates. For instance, positively regulates many B-cell specific genes including BCR or CD40 while repressing genes that direct cells into alternative lineages, including GATA3 and TCF7 for the T-cell lineage. In addition to its role during lymphopoiesis, controls the thermogenic gene program in adipocytes during development and in response to environmental cold. Its function is as follows. (Microbial infection) Acts as a chromatin anchor for Epstein-Barr virus EBNA2 to mediate the assembly of EBNA2 chromatin complexes in B-cells. In addition, binds to the viral LMP1 proximal promoter and promotes its expression during latency. The polypeptide is Transcription factor COE1 (EBF1) (Homo sapiens (Human)).